A 130-amino-acid chain; its full sequence is Glycine cleavage system H protein (130 aa).

The Lipoyl-binding domain maps to 22–103 (KAYIGISDCA…PYGSWIAAIE (82 aa)). Position 63 is an N6-lipoyllysine (lysine 63).

Belongs to the GcvH family. As to quaternary structure, the glycine cleavage system is composed of four proteins: P, T, L and H. The cofactor is (R)-lipoate.

Functionally, the glycine cleavage system catalyzes the degradation of glycine. The H protein shuttles the methylamine group of glycine from the P protein to the T protein. The chain is Glycine cleavage system H protein from Clostridium botulinum (strain ATCC 19397 / Type A).